Reading from the N-terminus, the 344-residue chain is Dihydroorotase (344 aa).

Positions 14 and 16 each coordinate Zn(2+). Substrate-binding positions include 16–18 and asparagine 42; that span reads HLR. Zn(2+)-binding residues include lysine 100, histidine 137, and histidine 175. Lysine 100 is modified (N6-carboxylysine). Histidine 137 contributes to the substrate binding site. Substrate is bound at residue leucine 220. Position 248 (aspartate 248) interacts with Zn(2+). Residue aspartate 248 is part of the active site. Histidine 252 and alanine 264 together coordinate substrate.

It belongs to the metallo-dependent hydrolases superfamily. DHOase family. Class II DHOase subfamily. Homodimer. Zn(2+) serves as cofactor.

It catalyses the reaction (S)-dihydroorotate + H2O = N-carbamoyl-L-aspartate + H(+). It functions in the pathway pyrimidine metabolism; UMP biosynthesis via de novo pathway; (S)-dihydroorotate from bicarbonate: step 3/3. Functionally, catalyzes the reversible cyclization of carbamoyl aspartate to dihydroorotate. The polypeptide is Dihydroorotase (Roseobacter denitrificans (strain ATCC 33942 / OCh 114) (Erythrobacter sp. (strain OCh 114))).